Consider the following 75-residue polypeptide: MASLKKSLFLVLFLGFVSVSICEEEKRQEDEDEHEEEGENQEEGSEEKRGLFSVLGSVAKHVVPRVVPVIAEHLG.

Residues 1–22 form the signal peptide; the sequence is MASLKKSLFLVLFLGFVSVSIC. The propeptide occupies 23–49; sequence EEEKRQEDEDEHEEEGENQEEGSEEKR. The disordered stretch occupies residues 24–48; the sequence is EEKRQEDEDEHEEEGENQEEGSEEK. The segment covering 30 to 45 has biased composition (acidic residues); sequence DEDEHEEEGENQEEGS. Leu-74 carries the post-translational modification Leucine amide.

This sequence belongs to the frog skin active peptide (FSAP) family. Caerin subfamily. As to expression, expressed by the skin glands.

The protein localises to the secreted. The protein resides in the target cell membrane. Its function is as follows. Cationic amphipathic alpha-helical antimicrobial peptide with weak or no activity against both Gram-positive and Gram-negative bacteria. Is weakly active against E.coli (MIC=25 uM), E.cloacae (MIC=50 uM), K.pneumoniae (MIC=25 uM), and S.haemolyticus (MIC=50 uM). Has no activity against S.typhimurium, S.enteritidis, B.megaterium, and S.aureus (MIC&gt;100 uM). In Ranoidea caerulea (Green tree frog), this protein is Caerin 1.11.